Here is a 180-residue protein sequence, read N- to C-terminus: Adenine phosphoribosyltransferase (180 aa).

The residue at position 2 (Ser2) is an N-acetylserine. 2 positions are modified to phosphoserine: Ser15 and Ser30. Tyr60 carries the phosphotyrosine modification. The residue at position 66 (Ser66) is a Phosphoserine. An N6-acetyllysine modification is found at Lys114. A Phosphothreonine modification is found at Thr135.

This sequence belongs to the purine/pyrimidine phosphoribosyltransferase family. As to quaternary structure, homodimer.

Its subcellular location is the cytoplasm. The enzyme catalyses AMP + diphosphate = 5-phospho-alpha-D-ribose 1-diphosphate + adenine. The protein operates within purine metabolism; AMP biosynthesis via salvage pathway; AMP from adenine: step 1/1. Functionally, catalyzes a salvage reaction resulting in the formation of AMP, that is energically less costly than de novo synthesis. This is Adenine phosphoribosyltransferase from Mus musculus (Mouse).